Reading from the N-terminus, the 182-residue chain is MSDNFALHGTTILCLKKKEEIIIAADGQVSHGNTVLKSTARKLRTIANNKIIVGFAGSTADGLALFEKLEIKIEQYNSNLLRSAVELAKDWRNDKYLRRLEAMMIVADRSHILILTGNGDVIEPENNVAAIGSGGLFALSAARALMSYENNLTAEEIALKSMNIAADLCVFSNHNIIMEKVV.

Residue T10 is part of the active site. Na(+) contacts are provided by A166, C169, and S172.

It belongs to the peptidase T1B family. HslV subfamily. As to quaternary structure, a double ring-shaped homohexamer of HslV is capped on each side by a ring-shaped HslU homohexamer. The assembly of the HslU/HslV complex is dependent on binding of ATP.

It is found in the cytoplasm. The catalysed reaction is ATP-dependent cleavage of peptide bonds with broad specificity.. With respect to regulation, allosterically activated by HslU binding. Its function is as follows. Protease subunit of a proteasome-like degradation complex believed to be a general protein degrading machinery. The polypeptide is ATP-dependent protease subunit HslV (Rickettsia prowazekii (strain Madrid E)).